The sequence spans 280 residues: Tryptophan synthase alpha chain (280 aa).

Active-site proton acceptor residues include E49 and D60.

It belongs to the TrpA family. In terms of assembly, tetramer of two alpha and two beta chains.

It catalyses the reaction (1S,2R)-1-C-(indol-3-yl)glycerol 3-phosphate + L-serine = D-glyceraldehyde 3-phosphate + L-tryptophan + H2O. The protein operates within amino-acid biosynthesis; L-tryptophan biosynthesis; L-tryptophan from chorismate: step 5/5. In terms of biological role, the alpha subunit is responsible for the aldol cleavage of indoleglycerol phosphate to indole and glyceraldehyde 3-phosphate. The chain is Tryptophan synthase alpha chain from Corynebacterium efficiens (strain DSM 44549 / YS-314 / AJ 12310 / JCM 11189 / NBRC 100395).